Reading from the N-terminus, the 470-residue chain is Arginine ADP-riboxanase OspC1 (470 aa).

NAD(+) is bound by residues H138, Q139, S140, L144, I157, N167, F183, H201, F206, D226, and E320. E320 is a catalytic residue. ANK repeat units follow at residues 363–392 (IALQALFLSITNQKEDVALYILSNFEITRQ), 399–431 (HELYDIEYLLSAHNSSCKVLEYFINKGLVDVNT), and 438–467 (SGDCMLDNAIKYENAEMIKLLLKYGATSDN).

The protein belongs to the OspC family. Interacts with host calmodulin (CALM1, CALM2 and/or CALM3); specifically interacts with the apo form of calmodulin, preventing calcium-binding.

It is found in the secreted. Its subcellular location is the host nucleus. It catalyses the reaction L-arginyl-[protein] + NAD(+) = ADP-riboxanated L-argininyl-[protein] + nicotinamide + NH4(+) + H(+). Its function is as follows. ADP-riboxanase effector that mediates arginine ADP-riboxanation of host caspases. ADP-riboxanation of host apoptotic caspases (CASP3, CASP8 and CASP9) prevents their activation, thereby inhibiting host cell extrinsic and intrinsic apoptosis. Does not catalyze ADP-riboxanation of host CASP4/CASP11. Independently of its ADP-riboxanase activity, acts as an inhibitor of calcium signaling by inhibiting host calmodulin, preventing activation of the JAK-STAT signaling pathway in response to interferon-beta. Mechanistically, acts by binding to the apo form of calmodulin, preventing calcium-binding and ability to activate host CaMK2 (CAMKII), which is required to stimulate the JAK-STAT signaling pathway in response to interferon-beta. The protein is Arginine ADP-riboxanase OspC1 of Shigella flexneri.